The sequence spans 347 residues: S-adenosylmethionine:tRNA ribosyltransferase-isomerase (347 aa).

Belongs to the QueA family. Monomer.

It is found in the cytoplasm. The enzyme catalyses 7-aminomethyl-7-carbaguanosine(34) in tRNA + S-adenosyl-L-methionine = epoxyqueuosine(34) in tRNA + adenine + L-methionine + 2 H(+). It participates in tRNA modification; tRNA-queuosine biosynthesis. Functionally, transfers and isomerizes the ribose moiety from AdoMet to the 7-aminomethyl group of 7-deazaguanine (preQ1-tRNA) to give epoxyqueuosine (oQ-tRNA). This is S-adenosylmethionine:tRNA ribosyltransferase-isomerase from Halalkalibacterium halodurans (strain ATCC BAA-125 / DSM 18197 / FERM 7344 / JCM 9153 / C-125) (Bacillus halodurans).